A 368-amino-acid polypeptide reads, in one-letter code: Propane 2-monooxygenase, hydroxylase component small subunit (368 aa).

It belongs to the TmoE/XamoE family. As to quaternary structure, the propane 2-monooxygenase multicomponent enzyme system is composed of an electron transfer component and a monooxygenase component interacting with the effector protein PrmD. The electron transfer component is composed of a reductase (PrmB), and the monooxygenase component is formed by a large subunit (PrmA) and a small subunit (PrmC). Probably requires the presence of the chaperonin-like protein PrmG to ensure a productive folding, resulting of a soluble PrmC, which leads to the active form of PrmABCD.

It catalyses the reaction propane + NADH + O2 + H(+) = propan-2-ol + NAD(+) + H2O. In terms of biological role, component of the propane 2-monooxygenase multicomponent enzyme system which is involved in the degradation of propane via the O2-dependent hydroxylation of propane. Also able to catalyze the oxidation the water contaminant N-nitrosodimethylamine (NDMA). The chain is Propane 2-monooxygenase, hydroxylase component small subunit from Rhodococcus jostii (strain RHA1).